The chain runs to 91 residues: UPF0250 protein PFLU_5418 (91 aa).

This sequence belongs to the UPF0250 family.

This Pseudomonas fluorescens (strain SBW25) protein is UPF0250 protein PFLU_5418.